A 277-amino-acid chain; its full sequence is Thymidylate synthase (277 aa).

Residue R21 coordinates dUMP. Residue H51 coordinates (6R)-5,10-methylene-5,6,7,8-tetrahydrofolate. 126–127 (RR) is a dUMP binding site. C159 acts as the Nucleophile in catalysis. Residues 179-182 (RSGD), N190, and 220-222 (HLY) contribute to the dUMP site. Position 182 (D182) interacts with (6R)-5,10-methylene-5,6,7,8-tetrahydrofolate. A276 is a (6R)-5,10-methylene-5,6,7,8-tetrahydrofolate binding site.

The protein belongs to the thymidylate synthase family. Bacterial-type ThyA subfamily. In terms of assembly, homodimer.

It is found in the cytoplasm. The catalysed reaction is dUMP + (6R)-5,10-methylene-5,6,7,8-tetrahydrofolate = 7,8-dihydrofolate + dTMP. Its pathway is pyrimidine metabolism; dTTP biosynthesis. Its function is as follows. Catalyzes the reductive methylation of 2'-deoxyuridine-5'-monophosphate (dUMP) to 2'-deoxythymidine-5'-monophosphate (dTMP) while utilizing 5,10-methylenetetrahydrofolate (mTHF) as the methyl donor and reductant in the reaction, yielding dihydrofolate (DHF) as a by-product. This enzymatic reaction provides an intracellular de novo source of dTMP, an essential precursor for DNA biosynthesis. The sequence is that of Thymidylate synthase from Alcanivorax borkumensis (strain ATCC 700651 / DSM 11573 / NCIMB 13689 / SK2).